The chain runs to 91 residues: Elongation factor 1-beta (91 aa).

This sequence belongs to the EF-1-beta/EF-1-delta family.

Promotes the exchange of GDP for GTP in EF-1-alpha/GDP, thus allowing the regeneration of EF-1-alpha/GTP that could then be used to form the ternary complex EF-1-alpha/GTP/AAtRNA. The sequence is that of Elongation factor 1-beta (ef1b) from Pyrococcus abyssi (strain GE5 / Orsay).